Here is a 400-residue protein sequence, read N- to C-terminus: S-adenosylmethionine synthase (400 aa).

Position 136–141 (136–141) interacts with ATP; it reads GTGSTD.

The protein belongs to the AdoMet synthase 2 family. Mg(2+) is required as a cofactor.

The catalysed reaction is L-methionine + ATP + H2O = S-adenosyl-L-methionine + phosphate + diphosphate. Its pathway is amino-acid biosynthesis; S-adenosyl-L-methionine biosynthesis; S-adenosyl-L-methionine from L-methionine: step 1/1. Catalyzes the formation of S-adenosylmethionine from methionine and ATP. The chain is S-adenosylmethionine synthase from Methanospirillum hungatei JF-1 (strain ATCC 27890 / DSM 864 / NBRC 100397 / JF-1).